The sequence spans 286 residues: uncharacterized protein (286 aa).

The protein belongs to the chlamydial CPn_0389/CT_041/TC_0311 family.

This is an uncharacterized protein from Chlamydia muridarum (strain MoPn / Nigg).